The following is a 148-amino-acid chain: Putative pre-16S rRNA nuclease (148 aa).

The protein belongs to the YqgF nuclease family.

It is found in the cytoplasm. Its function is as follows. Could be a nuclease involved in processing of the 5'-end of pre-16S rRNA. The polypeptide is Putative pre-16S rRNA nuclease (Colwellia psychrerythraea (strain 34H / ATCC BAA-681) (Vibrio psychroerythus)).